We begin with the raw amino-acid sequence, 91 residues long: Small ribosomal subunit protein uS19 (91 aa).

Belongs to the universal ribosomal protein uS19 family.

Functionally, protein S19 forms a complex with S13 that binds strongly to the 16S ribosomal RNA. The sequence is that of Small ribosomal subunit protein uS19 from Paraburkholderia phymatum (strain DSM 17167 / CIP 108236 / LMG 21445 / STM815) (Burkholderia phymatum).